The chain runs to 397 residues: Cercosporin biosynthesis regulatory protein CTB8 (397 aa).

The zn(2)-C6 fungal-type DNA-binding region spans 26–53; that stretch reads CTHCSSQKIRCTKERPACARCVNKGLLC. Disordered stretches follow at residues 63–90 and 173–198; these read TRRH…APDS and AEAS…ATTH. Residues 74-87 show a composition bias toward polar residues; sequence PETTISNAPTSSVA. Over residues 179–197 the composition is skewed to low complexity; the sequence is PSSSSSPPSQRSDGGRATT.

Its subcellular location is the nucleus. Its function is as follows. Transcription regulator of the gene cluster that mediates the biosynthesis of cercosporin, a light-activated, non-host-selective toxin. The perylenequinone chromophore of cercosporin absorbs light energy to attain an electronically-activated triplet state and produces active oxygen species such as the hydroxyl radical, superoxide, hydrogen peroxide or singlet oxygen upon reaction with oxygen molecules. These reactive oxygen species cause damage to various cellular components including lipids, proteins and nucleic acids. The protein is Cercosporin biosynthesis regulatory protein CTB8 of Cercospora beticola (Sugarbeet leaf spot fungus).